Here is a 386-residue protein sequence, read N- to C-terminus: MNISNIKIMLLGSGELGKEFIIAAQRLGIHTIAVDRYKNAPAMQVAHESYVIDMLNSDALEQLILAKNPTYIVPEIEAINTDSLVKLEAHNFNIIPCAKATKLTMDRQGIRALAVQQLNLQTSKFAFANSEQEYLDVIQSIGLPFVIKPVMSSSGKGQSIVKEHNEIKKAWDYAQNGSRGHAKGVIVEQFIDFDYEITLLTVRHKDGTSFCDPIGHIQKDGDYRFSWQPHTMPDTALAKSQEIAKEITDALGGYGVFGVELFIKGDEVFFNEVSPRPHDTGMVTLISQNINEFELHLRAIVGLPIPDIQTLQPSASAAILLEGDTANASICGIDKALADANVDIRIFSKKEIHGKRRMGVVLAKAQNTHIALETSKQALAHIHLTK.

N(1)-(5-phospho-beta-D-ribosyl)glycinamide-binding positions include 15–16 and Glu-75; that span reads EL. ATP-binding positions include Arg-107, Lys-148, 153 to 158, 188 to 191, and Glu-196; these read SSGKGQ and EQFI. The ATP-grasp domain maps to 112–301; sequence ALAVQQLNLQ…EFELHLRAIV (190 aa). Mg(2+)-binding residues include Glu-260 and Glu-272. N(1)-(5-phospho-beta-D-ribosyl)glycinamide is bound by residues Asp-279, Lys-349, and 356–357; that span reads RR.

The protein belongs to the PurK/PurT family. As to quaternary structure, homodimer.

The catalysed reaction is N(1)-(5-phospho-beta-D-ribosyl)glycinamide + formate + ATP = N(2)-formyl-N(1)-(5-phospho-beta-D-ribosyl)glycinamide + ADP + phosphate + H(+). Its pathway is purine metabolism; IMP biosynthesis via de novo pathway; N(2)-formyl-N(1)-(5-phospho-D-ribosyl)glycinamide from N(1)-(5-phospho-D-ribosyl)glycinamide (formate route): step 1/1. Its function is as follows. Involved in the de novo purine biosynthesis. Catalyzes the transfer of formate to 5-phospho-ribosyl-glycinamide (GAR), producing 5-phospho-ribosyl-N-formylglycinamide (FGAR). Formate is provided by PurU via hydrolysis of 10-formyl-tetrahydrofolate. The chain is Formate-dependent phosphoribosylglycinamide formyltransferase from Francisella tularensis subsp. holarctica (strain LVS).